We begin with the raw amino-acid sequence, 706 residues long: Frizzled-6 (706 aa).

The first 18 residues, methionine 1–glycine 18, serve as a signal peptide directing secretion. Positions histidine 19 to threonine 132 constitute an FZ domain. At histidine 19–phenylalanine 201 the chain is on the extracellular side. Disulfide bonds link cysteine 24-cysteine 85, cysteine 32-cysteine 78, cysteine 69-cysteine 106, cysteine 95-cysteine 129, and cysteine 99-cysteine 123. N-linked (GlcNAc...) asparagine glycosylation is present at asparagine 38. A helical transmembrane segment spans residues isoleucine 202–isoleucine 222. At aspartate 223–proline 233 the chain is on the cytoplasmic side. A helical transmembrane segment spans residues isoleucine 234–leucine 254. Topologically, residues glycine 255–valine 284 are extracellular. A helical membrane pass occupies residues leucine 285–isoleucine 305. The Cytoplasmic segment spans residues threonine 306 to alanine 324. Residues valine 325–methionine 345 form a helical membrane-spanning segment. Over asparagine 346 to phenylalanine 370 the chain is Extracellular. An N-linked (GlcNAc...) asparagine glycan is attached at asparagine 352. The chain crosses the membrane as a helical span at residues valine 371 to isoleucine 391. The Cytoplasmic segment spans residues serine 392–arginine 416. A helical transmembrane segment spans residues isoleucine 417–tyrosine 437. Residues glutamate 438–leucine 473 lie on the Extracellular side of the membrane. Residues alanine 474–valine 494 traverse the membrane as a helical segment. Residues glycine 495–threonine 706 lie on the Cytoplasmic side of the membrane. The Lys-Thr-X-X-X-Trp motif, mediates interaction with the PDZ domain of Dvl family members signature appears at lysine 498–tryptophan 503. The segment at glutamate 588–threonine 706 is disordered. The span at alanine 646–isoleucine 658 shows a compositional bias: basic and acidic residues. Serine 653 is modified (phosphoserine). Over residues glycine 662–proline 672 the composition is skewed to polar residues. Low complexity predominate over residues serine 673–serine 685. Over residues valine 694–threonine 706 the composition is skewed to basic and acidic residues.

Belongs to the G-protein coupled receptor Fz/Smo family. In terms of assembly, interacts with LMBR1L. Post-translationally, ubiquitinated by ZNRF3, leading to its degradation by the proteasome. As to expression, detected in adult heart, brain, placenta, lung, liver, skeletal muscle, kidney, pancreas, thymus, prostate, testis, ovary, small intestine and colon. In the fetus, expressed in brain, lung, liver and kidney.

It is found in the membrane. The protein resides in the cell membrane. Its subcellular location is the cell surface. It localises to the apical cell membrane. The protein localises to the cytoplasmic vesicle membrane. It is found in the endoplasmic reticulum membrane. Receptor for Wnt proteins. Most of frizzled receptors are coupled to the beta-catenin canonical signaling pathway, which leads to the activation of disheveled proteins, inhibition of GSK-3 kinase, nuclear accumulation of beta-catenin and activation of Wnt target genes. A second signaling pathway involving PKC and calcium fluxes has been seen for some family members, but it is not yet clear if it represents a distinct pathway or if it can be integrated in the canonical pathway, as PKC seems to be required for Wnt-mediated inactivation of GSK-3 kinase. Both pathways seem to involve interactions with G-proteins. May be involved in transduction and intercellular transmission of polarity information during tissue morphogenesis and/or in differentiated tissues. Together with FZD3, is involved in the neural tube closure and plays a role in the regulation of the establishment of planar cell polarity (PCP), particularly in the orientation of asymmetric bundles of stereocilia on the apical faces of a subset of auditory and vestibular sensory cells located in the inner ear. This Homo sapiens (Human) protein is Frizzled-6 (FZD6).